Here is a 295-residue protein sequence, read N- to C-terminus: Transmembrane protein 71 (295 aa).

2 helical membrane-spanning segments follow: residues 229-249 (LLQE…ISAC) and 253-273 (FMGE…VAYV).

The protein belongs to the TMEM71 family.

Its subcellular location is the membrane. In Homo sapiens (Human), this protein is Transmembrane protein 71 (TMEM71).